Reading from the N-terminus, the 71-residue chain is Small ribosomal subunit protein bS21 (71 aa).

The protein belongs to the bacterial ribosomal protein bS21 family.

The sequence is that of Small ribosomal subunit protein bS21 from Acinetobacter baylyi (strain ATCC 33305 / BD413 / ADP1).